Consider the following 164-residue polypeptide: Lipocalin-like 1 protein (164 aa).

It belongs to the calycin superfamily. Lipocalin family.

The chain is Lipocalin-like 1 protein (LCNL1) from Homo sapiens (Human).